A 124-amino-acid polypeptide reads, in one-letter code: Small ribosomal subunit protein uS12 (124 aa).

The tract at residues 1–24 is disordered; sequence MPTINQLIKKPRKSQKEKTASPAL. The residue at position 89 (D89) is a 3-methylthioaspartic acid.

Belongs to the universal ribosomal protein uS12 family. Part of the 30S ribosomal subunit. Contacts proteins S8 and S17. May interact with IF1 in the 30S initiation complex.

With S4 and S5 plays an important role in translational accuracy. In terms of biological role, interacts with and stabilizes bases of the 16S rRNA that are involved in tRNA selection in the A site and with the mRNA backbone. Located at the interface of the 30S and 50S subunits, it traverses the body of the 30S subunit contacting proteins on the other side and probably holding the rRNA structure together. The combined cluster of proteins S8, S12 and S17 appears to hold together the shoulder and platform of the 30S subunit. This chain is Small ribosomal subunit protein uS12, found in Borrelia hermsii (strain HS1 / DAH).